The primary structure comprises 350 residues: Melatonin receptor type 1A (350 aa).

Residues 1 to 29 (MQGNGSALPNASQPVLRGDGARPSWLASA) are Extracellular-facing. Asn4 and Asn10 each carry an N-linked (GlcNAc...) asparagine glycan. The helical transmembrane segment at 30 to 50 (LACVLIFTIVVDILGNLLVIL) threads the bilayer. The Cytoplasmic portion of the chain corresponds to 51 to 63 (SVYRNKKLRNAGN). The chain crosses the membrane as a helical span at residues 64 to 84 (IFVVSLAVADLVVAIYPYPLV). The Extracellular segment spans residues 85–102 (LMSIFNNGWNLGYLHCQV). Cys100 and Cys177 are oxidised to a cystine. Residues 103–123 (SGFLMGLSVIGSIFNITGIAI) form a helical membrane-spanning segment. Residues 124-142 (NRYCYICHSLKYDKLYSSK) are Cytoplasmic-facing. Residues 143–163 (NSLCYVLLIWLLTLAAVLPNL) form a helical membrane-spanning segment. Melatonin is bound by residues Asn162 and Gln181. Over 164–187 (RAGTLQYDPRIYSCTFAQSVSSAY) the chain is Extracellular. Residues 188 to 208 (TIAVVVFHFLVPMIIVIFCYL) traverse the membrane as a helical segment. The Cytoplasmic portion of the chain corresponds to 209-240 (RIWILVLQVRQRVKPDRKPKLKPQDFRNFVTM). A helical transmembrane segment spans residues 241-261 (FVVFVLFAICWAPLNFIGLAV). Residues 262–274 (ASDPASMVPRIPE) are Extracellular-facing. Residues 275–295 (WLFVASYYMAYFNSCLNAIIY) form a helical membrane-spanning segment. Residues 296-350 (GLLNQNFRKEYRRIIVSLCTARVFFVDSSNDVADRVKWKPSPLMTNNNVVKVDSV) lie on the Cytoplasmic side of the membrane.

Belongs to the G-protein coupled receptor 1 family. In terms of tissue distribution, expressed in hypophyseal pars tuberalis and hypothalamic suprachiasmatic nuclei (SCN). Hippocampus.

The protein resides in the cell membrane. Its function is as follows. High affinity receptor for melatonin. Likely to mediate the reproductive and circadian actions of melatonin. The activity of this receptor is mediated by pertussis toxin sensitive G proteins that inhibit adenylate cyclase activity. Possibly involved in sleep induction, by melatonin activation of the potassium channel KCNMA1/BK and the dissociation of G-beta and G-gamma subunits, thereby decreasing synaptic transmission. The chain is Melatonin receptor type 1A (MTNR1A) from Homo sapiens (Human).